Consider the following 695-residue polypeptide: Protein MALE DISCOVERER 1 (695 aa).

A signal peptide spans 1 to 29 (MGCRWNPIGFQFSCFMFLIITLQSRSSLS). Residues 30–340 (LESEGFVLLK…SKGFKDVWLY (311 aa)) are Extracellular-facing. Residues Asn-56 and Asn-80 are each glycosylated (N-linked (GlcNAc...) asparagine). LRR repeat units follow at residues 75-98 (KVQM…SQLS), 99-121 (ELRS…FASF), 123-144 (KLEF…ELNK), and 147-168 (TPEN…KFLR). An N-linked (GlcNAc...) asparagine glycan is attached at Asn-247. A disordered region spans residues 302-325 (PPLIPPSSPPPLPTNNTIASDPPR). Residues 303–314 (PLIPPSSPPPLP) are compositionally biased toward pro residues. Residue Asn-316 is glycosylated (N-linked (GlcNAc...) asparagine). The helical transmembrane segment at 341–361 (VVIGVAAFVAMLIIVAVIFFF) threads the bilayer. Topologically, residues 362–695 (RKRAVKSIGP…ELEILSSEAT (334 aa)) are cytoplasmic. The region spanning 363 to 668 (KRAVKSIGPW…YVVQQLKEVI (306 aa)) is the Protein kinase domain. At Ser-652 the chain carries Phosphoserine.

This sequence belongs to the protein kinase superfamily. Ser/Thr protein kinase family. In terms of assembly, homodimer. Interacts with MIK1, MIK2 and LURE1.2. LURE1.2 enhances the heterodimerization of MDIS1 with MIK1 or MIK2. Post-translationally, phosphorylated by MIK1. As to expression, expressed in pollen tubes and seedlings.

It is found in the cell membrane. The protein resides in the endomembrane system. It carries out the reaction L-seryl-[protein] + ATP = O-phospho-L-seryl-[protein] + ADP + H(+). The enzyme catalyses L-threonyl-[protein] + ATP = O-phospho-L-threonyl-[protein] + ADP + H(+). Involved in the pollen tube perception of the female signal. The chain is Protein MALE DISCOVERER 1 from Arabidopsis thaliana (Mouse-ear cress).